The following is a 147-amino-acid chain: Large ribosomal subunit protein uL22c (147 aa).

The protein belongs to the universal ribosomal protein uL22 family. As to quaternary structure, part of the 50S ribosomal subunit.

The protein localises to the plastid. This protein binds specifically to 23S rRNA. Its function is as follows. The globular domain of the protein is located near the polypeptide exit tunnel on the outside of the subunit, while an extended beta-hairpin is found that lines the wall of the exit tunnel in the center of the 70S ribosome. The chain is Large ribosomal subunit protein uL22c (rpl22) from Cuscuta gronovii (Common dodder).